We begin with the raw amino-acid sequence, 208 residues long: Imidazoleglycerol-phosphate dehydratase (208 aa).

The protein belongs to the imidazoleglycerol-phosphate dehydratase family.

The enzyme catalyses D-erythro-1-(imidazol-4-yl)glycerol 3-phosphate = 3-(imidazol-4-yl)-2-oxopropyl phosphate + H2O. It functions in the pathway amino-acid biosynthesis; L-histidine biosynthesis; L-histidine from 5-phospho-alpha-D-ribose 1-diphosphate: step 6/9. This chain is Imidazoleglycerol-phosphate dehydratase (his3), found in Trichoderma harzianum (Hypocrea lixii).